Here is a 215-residue protein sequence, read N- to C-terminus: 3-isopropylmalate dehydratase small subunit (215 aa).

Belongs to the LeuD family. LeuD type 1 subfamily. Heterodimer of LeuC and LeuD.

The catalysed reaction is (2R,3S)-3-isopropylmalate = (2S)-2-isopropylmalate. It participates in amino-acid biosynthesis; L-leucine biosynthesis; L-leucine from 3-methyl-2-oxobutanoate: step 2/4. In terms of biological role, catalyzes the isomerization between 2-isopropylmalate and 3-isopropylmalate, via the formation of 2-isopropylmaleate. This is 3-isopropylmalate dehydratase small subunit from Xanthomonas axonopodis pv. citri (strain 306).